A 327-amino-acid polypeptide reads, in one-letter code: GMP reductase (327 aa).

The active-site Thioimidate intermediate is cysteine 175. 204–227 serves as a coordination point for NADP(+); the sequence is IIADGGIRTPGDIAKSIRFGATMV.

It belongs to the IMPDH/GMPR family. GuaC type 2 subfamily.

It carries out the reaction IMP + NH4(+) + NADP(+) = GMP + NADPH + 2 H(+). In terms of biological role, catalyzes the irreversible NADPH-dependent deamination of GMP to IMP. It functions in the conversion of nucleobase, nucleoside and nucleotide derivatives of G to A nucleotides, and in maintaining the intracellular balance of A and G nucleotides. The polypeptide is GMP reductase (Clostridium acetobutylicum (strain ATCC 824 / DSM 792 / JCM 1419 / IAM 19013 / LMG 5710 / NBRC 13948 / NRRL B-527 / VKM B-1787 / 2291 / W)).